The sequence spans 442 residues: Putative pyrimidine permease RutG (442 aa).

The Cytoplasmic portion of the chain corresponds to 1–57; that stretch reads MAMFGFPHWQLKSTSTESGVVAPDERLPFAQTAVMGVQHAVAMFGATVLMPILMGLD. A helical membrane pass occupies residues 58–78; that stretch reads PNLSILMSGIGTLLFFFITGG. A topological domain (periplasmic) is located at residue R79. Residues 80-100 form a helical membrane-spanning segment; that stretch reads VPSYLGSSAAFVGVVIAATGF. Over 101-110 the chain is Cytoplasmic; the sequence is NGQGINPNIS. A helical transmembrane segment spans residues 111–131; sequence IALGGIIACGLVYTVIGLVVM. The Periplasmic portion of the chain corresponds to 132 to 140; that stretch reads KIGTRWIER. The chain crosses the membrane as a helical span at residues 141–161; the sequence is LMPPVVTGAVVMAIGLNLAPI. At 162-169 the chain is on the cytoplasmic side; sequence AVKSVSAS. Residues 170 to 190 form a helical membrane-spanning segment; that stretch reads AFDSWMAVMTVLCIGLVAVFT. Over 191 to 196 the chain is Periplasmic; sequence RGMIQR. Residues 197-217 form a helical membrane-spanning segment; sequence LLILVGLIVACLLYGVMTNVL. Topologically, residues 218-240 are cytoplasmic; it reads GLGKAVDFTLVSHAAWFGLPHFS. The chain crosses the membrane as a helical span at residues 241-261; it reads TPAFNGQAMMLIAPVAVILVA. The Periplasmic segment spans residues 262–284; that stretch reads ENLGHLKAVAGMTGRNMDPYMGR. Residues 285 to 305 form a helical membrane-spanning segment; it reads AFVGDGLATMLSGSVGGSGVT. Residues 306-318 lie on the Cytoplasmic side of the membrane; that stretch reads TYAENIGVMAVTK. The chain crosses the membrane as a helical span at residues 319-339; sequence VYSTLVFVAAAVIAMLLGFSP. The Periplasmic portion of the chain corresponds to 340-347; the sequence is KFGALIHT. The helical transmembrane segment at 348–368 threads the bilayer; sequence IPAAVIGGASIVVFGLIAVAG. Residues 369–385 are Cytoplasmic-facing; sequence ARIWVQNRVDLSQNGNL. 2 helical membrane-spanning segments follow: residues 386-406 and 407-427; these read IMVA…LGGF and TLGG…LLSR. The Cytoplasmic segment spans residues 428–442; that stretch reads KLVDVPPPEVVHQEP.

Belongs to the nucleobase:cation symporter-2 (NCS2) (TC 2.A.40) family.

It localises to the cell inner membrane. In terms of biological role, may function as a proton-driven pyrimidine uptake system. This chain is Putative pyrimidine permease RutG (rutG), found in Escherichia coli (strain K12).